Reading from the N-terminus, the 526-residue chain is Exodeoxyribonuclease 7 large subunit (526 aa).

The tract at residues 499-526 (AGEDGTPSQAPKKRPARAGEPTKQGSLF) is disordered.

It belongs to the XseA family. In terms of assembly, heterooligomer composed of large and small subunits.

The protein resides in the cytoplasm. It carries out the reaction Exonucleolytic cleavage in either 5'- to 3'- or 3'- to 5'-direction to yield nucleoside 5'-phosphates.. Its function is as follows. Bidirectionally degrades single-stranded DNA into large acid-insoluble oligonucleotides, which are then degraded further into small acid-soluble oligonucleotides. This is Exodeoxyribonuclease 7 large subunit from Sinorhizobium medicae (strain WSM419) (Ensifer medicae).